A 246-amino-acid chain; its full sequence is MNDRIIDFDPLIEGVLIKRYKRYLADIALESGEVVTAHCANTGPMKGLLREGAKVRISVSTSPKRKLPFTWEQICVLDEKNEEVWVGINTLFANKLIKKVIEKNLLDEIIGEIETIKSEVPYGKDKKSRIDFFLTPKSSNPDKRNIYIEVKNTTWIRGNVALFPDTVTKRGQKHLIELKELIPESKSVLVLCITRKDACFFAPGDEADPLYGNLFRESLSAGMITIPCSFEFHKDHISWRGIKPLK.

Belongs to the SfsA family.

The protein is Sugar fermentation stimulation protein homolog of Prochlorococcus marinus (strain MIT 9301).